A 322-amino-acid chain; its full sequence is Acetyl-coenzyme A carboxylase carboxyl transferase subunit alpha (322 aa).

Residues 43-297 (ALKSKSNALT…KEVLTQQLNK (255 aa)) form the CoA carboxyltransferase C-terminal domain.

The protein belongs to the AccA family. As to quaternary structure, acetyl-CoA carboxylase is a heterohexamer composed of biotin carboxyl carrier protein (AccB), biotin carboxylase (AccC) and two subunits each of ACCase subunit alpha (AccA) and ACCase subunit beta (AccD).

It is found in the cytoplasm. It catalyses the reaction N(6)-carboxybiotinyl-L-lysyl-[protein] + acetyl-CoA = N(6)-biotinyl-L-lysyl-[protein] + malonyl-CoA. Its pathway is lipid metabolism; malonyl-CoA biosynthesis; malonyl-CoA from acetyl-CoA: step 1/1. Component of the acetyl coenzyme A carboxylase (ACC) complex. First, biotin carboxylase catalyzes the carboxylation of biotin on its carrier protein (BCCP) and then the CO(2) group is transferred by the carboxyltransferase to acetyl-CoA to form malonyl-CoA. In Vesicomyosocius okutanii subsp. Calyptogena okutanii (strain HA), this protein is Acetyl-coenzyme A carboxylase carboxyl transferase subunit alpha.